Consider the following 312-residue polypeptide: 2-phospho-L-lactate transferase (312 aa).

The 7,8-didemethyl-8-hydroxy-5-deazariboflavin site is built by Asp-50 and Lys-89.

The protein belongs to the CofD family. As to quaternary structure, homodimer. It depends on Mg(2+) as a cofactor.

The enzyme catalyses (2S)-lactyl-2-diphospho-5'-guanosine + 7,8-didemethyl-8-hydroxy-5-deazariboflavin = oxidized coenzyme F420-0 + GMP + H(+). It participates in cofactor biosynthesis; coenzyme F420 biosynthesis. Its function is as follows. Catalyzes the transfer of the 2-phospholactate moiety from (2S)-lactyl-2-diphospho-5'-guanosine to 7,8-didemethyl-8-hydroxy-5-deazariboflavin (FO) with the formation of oxidized coenzyme F420-0 and GMP. The chain is 2-phospho-L-lactate transferase from Methanococcus vannielii (strain ATCC 35089 / DSM 1224 / JCM 13029 / OCM 148 / SB).